Reading from the N-terminus, the 197-residue chain is Beta-crystallin A2 (197 aa).

Positions 1-11 (MSSAPAQGPAP) are N-terminal arm. Beta/gamma crystallin 'Greek key' domains are found at residues 12-52 (ASLT…KVEN) and 53-99 (GAWV…RPVL). The interval 100–105 (CANHSD) is connecting peptide. 2 consecutive Beta/gamma crystallin 'Greek key' domains span residues 106-147 (SRVT…KVSS) and 148-196 (GAWV…RRVQ).

Belongs to the beta/gamma-crystallin family. Homo/heterodimer, or complexes of higher-order. The structure of beta-crystallin oligomers seems to be stabilized through interactions between the N-terminal arms.

Functionally, crystallins are the dominant structural components of the vertebrate eye lens. This is Beta-crystallin A2 (CRYBA2) from Bos taurus (Bovine).